The following is a 523-amino-acid chain: Peptide chain release factor 3 (523 aa).

The tr-type G domain maps to 8–275; sequence KKRRTFAIIS…TFLEYAPEPH (268 aa). GTP-binding positions include 17–24, 85–89, and 139–142; these read SHPDAGKT, DTPGH, and NKLD.

Belongs to the TRAFAC class translation factor GTPase superfamily. Classic translation factor GTPase family. PrfC subfamily.

Its subcellular location is the cytoplasm. In terms of biological role, increases the formation of ribosomal termination complexes and stimulates activities of RF-1 and RF-2. It binds guanine nucleotides and has strong preference for UGA stop codons. It may interact directly with the ribosome. The stimulation of RF-1 and RF-2 is significantly reduced by GTP and GDP, but not by GMP. This chain is Peptide chain release factor 3, found in Lactococcus lactis subsp. cremoris (strain SK11).